The primary structure comprises 67 residues: ATP synthase protein 8 (67 aa).

Residues 8–24 form a helical membrane-spanning segment; that stretch reads TWFITILSMLMTLFILF. N6-acetyllysine; alternate is present on lysine 54. Residue lysine 54 is modified to N6-succinyllysine; alternate. At lysine 57 the chain carries N6-acetyllysine.

The protein belongs to the ATPase protein 8 family. In terms of assembly, F-type ATPases have 2 components, CF(1) - the catalytic core - and CF(0) - the membrane proton channel. Component of an ATP synthase complex composed of ATP5PB, ATP5MC1, ATP5F1E, ATP5PD, ATP5ME, ATP5PF, ATP5MF, MT-ATP6, MT-ATP8, ATP5F1A, ATP5F1B, ATP5F1D, ATP5F1C, ATP5PO, ATP5MG, ATP5MK and ATP5MJ. Interacts with PRICKLE3.

The protein localises to the mitochondrion membrane. Functionally, mitochondrial membrane ATP synthase (F(1)F(0) ATP synthase or Complex V) produces ATP from ADP in the presence of a proton gradient across the membrane which is generated by electron transport complexes of the respiratory chain. F-type ATPases consist of two structural domains, F(1) - containing the extramembraneous catalytic core and F(0) - containing the membrane proton channel, linked together by a central stalk and a peripheral stalk. During catalysis, ATP synthesis in the catalytic domain of F(1) is coupled via a rotary mechanism of the central stalk subunits to proton translocation. Part of the complex F(0) domain. Minor subunit located with subunit a in the membrane. The chain is ATP synthase protein 8 (MT-ATP8) from Vicugna pacos (Alpaca).